The following is a 975-amino-acid chain: Lateral signaling target protein 2 homolog (975 aa).

Disordered stretches follow at residues Pro299 to Glu458 and Tyr504 to Ser523. Composition is skewed to low complexity over residues Ser302 to Thr352, Asn365 to Asn376, Thr383 to Ala400, and Pro408 to Trp429. A compositionally biased stretch (acidic residues) spans Ser430–Glu458. A phosphoserine mark is found at Ser540 and Ser541. Disordered stretches follow at residues Glu556–Ser633 and Asp740–Ala891. Basic residues predominate over residues Gly564 to Arg602. Over residues Leu621–Ser633 the composition is skewed to low complexity. Over residues Ala751 to Leu770 the composition is skewed to polar residues. Ser796 carries the phosphoserine modification. Composition is skewed to low complexity over residues Ala802–Ala860 and Pro877–Pro890. An FYVE-type zinc finger spans residues Asp895 to Val955. The Zn(2+) site is built by Cys901, Cys904, Cys917, Cys920, Cys925, Cys928, Cys947, and Cys950.

The protein belongs to the lst-2 family.

Its function is as follows. Negative regulator of epidermal growth factor receptor (EGFR) signaling. The protein is Lateral signaling target protein 2 homolog of Drosophila sechellia (Fruit fly).